Consider the following 1073-residue polypeptide: Envelopment polyprotein (1073 aa).

Positions 1-19 are cleaved as a signal peptide; sequence MMKVIWFSSLICLVIQCSG. The Lumenal segment spans residues 20 to 453; that stretch reads DSGPIICAGP…NPQCYPAKKW (434 aa). Cysteine 26 and cysteine 49 are oxidised to a cystine. Asparagine 33 and asparagine 63 each carry an N-linked (GlcNAc...) asparagine; by host glycan. Intrachain disulfides connect cysteine 143/cysteine 156, cysteine 180/cysteine 327, cysteine 206/cysteine 216, cysteine 258/cysteine 305, cysteine 287/cysteine 292, cysteine 349/cysteine 352, cysteine 356/cysteine 424, and cysteine 376/cysteine 381. The helical transmembrane segment at 454–474 threads the bilayer; it reads LFIIIVILLGYAGLMLLTNVL. Residues 475-521 are golgi retention signal; it reads KAIGVWGSWVIAPVKLMFAIIKKLMRTVSCLVGKLMDRGRQVIHEEI. Over 475-535 the chain is Cytoplasmic; it reads KAIGVWGSWV…EGNQDDVRIE (61 aa). An internal signal sequence for glycoprotein C region spans residues 536-562; the sequence is MARPRRVRHWMYSPVILTILAIGLAEG. 10 disulfides stabilise this stretch: cysteine 563/cysteine 604, cysteine 576/cysteine 586, cysteine 629/cysteine 725, cysteine 644/cysteine 841, cysteine 650/cysteine 698, cysteine 656/cysteine 705, cysteine 660/cysteine 687, cysteine 691/cysteine 696, cysteine 778/cysteine 793, and cysteine 809/cysteine 823. Residues 563 to 1036 lie on the Lumenal side of the membrane; it reads CDEMVHADSK…ALFGNGLSRW (474 aa). The segment at 650 to 656 is fusion loop; sequence CRWAGDC. The interval 691-705 is fusion loop; it reads CGGAACGCFNAAPSC. Asparagine 853 and asparagine 914 each carry an N-linked (GlcNAc...) asparagine; by host glycan. 3 disulfide bridges follow: cysteine 908-cysteine 978, cysteine 918-cysteine 921, and cysteine 943-cysteine 974. N-linked (GlcNAc...) asparagine; by host glycosylation occurs at asparagine 936. Residues 1037–1057 form a helical membrane-spanning segment; sequence ILGVIGVLLGGLALFFLIMFL. Residues 1058–1073 are Cytoplasmic-facing; sequence LKLGTKQVFRSRTKLA.

The protein belongs to the phlebovirus envelope glycoprotein family. Homodimer. Heterodimer with glycoprotein C. Homotrimer (postfusion). As to quaternary structure, heterodimer with glycoprotein N. Specific enzymatic cleavages in vivo yield mature proteins including glycoprotein C and glycoprotein N. Post-translationally, the cytoplasmic tail is Palmitoylated. In terms of processing, glycosylated. Palmitoylated.

The protein resides in the virion membrane. Its subcellular location is the host Golgi apparatus membrane. It localises to the host endoplasmic reticulum membrane. Functionally, structural component of the virion that interacts with glycoprotein C. It shields the hydrophobic fusion loops of the glycoprotein C, preventing premature fusion. The glycoprotein protrusions are arranged on an icosahedral lattice, with T=12 triangulation. They are able to attach the virion to the host cell receptor CD209/DC-SIGN and to promote fusion of membranes with the late endosome after clathrin-mediated endocytosis of the virion. Plays a role in the packaging of ribonucleoproteins and polymerase during virus assembly. Structural component of the virion that interacts with glycoprotein N. Acts as a class II fusion protein that is activated upon acidification and subsequent repositioning of the glycoprotein N. The glycoprotein protrusions are arranged on an icosahedral lattice, with T=12 triangulation. They are able to attach the virion to the host cell receptor CD209/DC-SIGN and to promote fusion of membranes with the late endosome after clathrin-mediated endocytosis of the virion. In SFTS phlebovirus (isolate SFTSV/Human/China/HB29/2010) (Severe fever with thrombocytopenia virus), this protein is Envelopment polyprotein (GP).